A 131-amino-acid chain; its full sequence is Large ribosomal subunit protein bL19 (131 aa).

Belongs to the bacterial ribosomal protein bL19 family.

Its function is as follows. This protein is located at the 30S-50S ribosomal subunit interface and may play a role in the structure and function of the aminoacyl-tRNA binding site. In Rhodopseudomonas palustris (strain HaA2), this protein is Large ribosomal subunit protein bL19.